Here is a 1179-residue protein sequence, read N- to C-terminus: MLYQNITNNSCINQALELYHKYCYDKTTYPDQIHTITKALQLDSSSFTAVLLHENIQHLNLEDYNHFNNNIIYLVDVINKLSTIHYKPYAEQYIHFHELLLTINPKLQETAILTSLVPLLHKVSIFNLEYNNTNAQHISEIITNCYIPYLLSYTAHNDLAYLLQDLCFKIQYPEERNRILHYMYWLYPDIDNIIHNIEQQFGNIFRKLNIKASLSYRIKSPYSIWIKTLVKDIHITALNDILAFRAIVPNKKACYDVSKLIHLHYNTITSQFVDYIRYPKNNGYQSIHLVISGGNKGNIELQIRSTTMHRQTQYGSAHHTYKVNKYYVSRTNNNVSVVLFNITLSYSNRILSVYVSIVTITSTINNNLYTDYNTIPSFTQYTQHSTNFVDNDITTCTLSRTTTPEYITYYNNNLSLLIKDTNTIPYNFFLNINLNLSNTVEYKLVPLAVVQIPASNLLFEHNSVFINITYKPILAECAFPATITYTKRHEDSNIRSIFKLFEHNSVFINITYKPILAECAFPATITYTKRHEDSNIRSIFKPPSPTYNTLLATINDKVVLEQYGQKEFLSTTINTNITQMLPIITLLVDPSELNKRINDISDSNKDQLLRLGLQLGCVESVPLLITHGANPNATNCHGVISLHCAAKNGNLDLAKLLAKNGADVNAKTDNGETVLHYAVKSGNLHLVKWLIENQANIHAKTDNGETVLHYAVSFNNSDLVYLLIAYGADVNAKTDNGLTALHYAVYDGNLDLVSLLISHGADVNAKTNSGETILYSAVDYGSPDLVYLLIAYGADVNAKTDNGETVLHYAVESGNLDLVSLLIHNGANVNNAKTILHFAAKSGNLNLVNWLIKNKADIHAKTNSGETILHFAAESGNLNLVNWLIKNKADIHAKTNSGETILHFAAKSGNLNLVNWLIKNKADIHAKTNSGETILHFAAKSGNLNLVNWLIKNKADIHAKTNSGETILHFAAESGNLNLVSLLIHNGTDINTKTDDGLTALHYAVESGNLNLVSLLIHKGIDVNAKTNSGETILHFAVDLGSLDLVSLLMVRGADVNAKTDDGLTALHYAVESDNLALVSLLMVYGADVNAKNNSGETPLHYAVIFNSLDLVSLLIHNGADINTKNNSGETVLNSIMEFNNCNILKSFILGGADINLETMLPDDQTDSIINLCGDLRIS.

18 ANK repeats span residues 282-311 (NGYQ…MHRQ), 604-633 (NKDQ…NPNA), 637-666 (HGVI…DVNA), 670-699 (NGET…NIHA), 703-732 (NGET…DVNA), 736-765 (NGLT…DVNA), 769-798 (SGET…DVNA), 802-831 (NGET…NVNN), 833-860 (KTIL…DIHA), 864-893 (SGET…DIHA), 897-926 (SGET…DIHA), 930-959 (SGET…DIHA), 963-992 (SGET…DINT), 996-1025 (DGLT…DVNA), 1029-1058 (SGET…DVNA), 1062-1091 (DGLT…DVNA), 1095-1124 (SGET…DINT), and 1128-1157 (SGET…DINL).

In Rickettsia felis (strain ATCC VR-1525 / URRWXCal2) (Rickettsia azadi), this protein is Putative ankyrin repeat protein RF_0381.